The sequence spans 270 residues: Non-homologous end joining protein Ku (270 aa).

In terms of domain architecture, Ku spans 10–194; that stretch reads SLGLLNIGIK…NYPIQKQELT (185 aa).

This sequence belongs to the prokaryotic Ku family. In terms of assembly, homodimer. Interacts with LigD.

Functionally, with LigD forms a non-homologous end joining (NHEJ) DNA repair enzyme, which repairs dsDNA breaks with reduced fidelity. Binds linear dsDNA with 5'- and 3'- overhangs but not closed circular dsDNA nor ssDNA. Recruits and stimulates the ligase activity of LigD. In Bacillus thuringiensis subsp. konkukian (strain 97-27), this protein is Non-homologous end joining protein Ku.